Here is a 261-residue protein sequence, read N- to C-terminus: MKQAILYVGHGSRVKKAQQEAAAFLEGCKAHISVPVQEISFLELQEPTIETGFEACVKQGATHIAVVPLLLLTAAHAKHDIPEEIVRVASRYPSVRISYGKPIGIDEEVVKAVYHRMKDIGVPYENARVVLIGRGSSDPDVKRDVTGIANLLQEMVPVKEVIPCFLTACGPNYKEVFSELEKDDGITTFIVPYLLFTGMLMNEIEREVQKLKAHNPNVYLSSYIGFHPHVKNAFLNRVRETAANSEGQFDFDGGSYASAAH.

Residues His10 and His76 each contribute to the Fe cation site.

This sequence belongs to the CbiX family. SirB subfamily.

It catalyses the reaction siroheme + 2 H(+) = sirohydrochlorin + Fe(2+). It functions in the pathway porphyrin-containing compound metabolism; siroheme biosynthesis; siroheme from sirohydrochlorin: step 1/1. Functionally, chelates iron to the siroheme precursor. The protein is Sirohydrochlorin ferrochelatase (sirB) of Bacillus subtilis (strain 168).